We begin with the raw amino-acid sequence, 243 residues long: MKVEKRKIDTESIKKFWVGLLEGSGSIQVNHWKKKNLQFRLEIKLKNCNENFLMFKDIQKAIGGYIRFETSKKKERDQVVWIVDQKTEIERIIKIFDQYALLTKQKQDQLNFLKENLQRQDVNWYLKERDNKYKVRVAHPDYKIKDITYFNEWLSGFVEAEGCFCIRTSTYHSFSISQKYEKVLLSQIKEFFNITTQIKESKKNIFLLEVYKKVILQKLIHHFIEYPLLGEKNKSFERFKNFF.

Belongs to the LAGLIDADG endonuclease family.

The protein resides in the mitochondrion. In terms of biological role, mitochondrial DNA endonuclease involved in intron homing. The polypeptide is Probable intron-encoded endonuclease aI3 (aI3) (Dictyostelium citrinum (Slime mold)).